The sequence spans 86 residues: Large ribosomal subunit protein bL35m (86 aa).

The N-terminal 18 residues, 1 to 18 (MLVVFQRVVRATVLVGRK), are a transit peptide targeting the mitochondrion. The tract at residues 45–69 (RKHAGAQHLNRDTSSSTRARQRQWE) is disordered.

This sequence belongs to the bacterial ribosomal protein bL35 family. In terms of assembly, component of the mitochondrial large ribosomal subunit (mt-LSU). Mature yeast 74S mitochondrial ribosomes consist of a small (37S) and a large (54S) subunit. The 37S small subunit contains a 15S ribosomal RNA (15S mt-rRNA) and at least 32 different proteins. The 54S large subunit contains a 21S rRNA (21S mt-rRNA) and at least 45 different proteins.

The protein resides in the mitochondrion. In terms of biological role, component of the mitochondrial ribosome (mitoribosome), a dedicated translation machinery responsible for the synthesis of mitochondrial genome-encoded proteins, including at least some of the essential transmembrane subunits of the mitochondrial respiratory chain. The mitoribosomes are attached to the mitochondrial inner membrane and translation products are cotranslationally integrated into the membrane. In Schizosaccharomyces pombe (strain 972 / ATCC 24843) (Fission yeast), this protein is Large ribosomal subunit protein bL35m (new15).